We begin with the raw amino-acid sequence, 142 residues long: Fluoride-specific ion channel FluC 1 (142 aa).

Helical transmembrane passes span 17 to 37, 42 to 62, 80 to 100, and 109 to 129; these read AWVSAGSVVGGLTRYLVGLAL, GFPFATLFINATGSLIIGFYA, FVMTGFCGGYTTFSAFSLETF, and YIALAYVASSVVCWLVSVWLG. The Na(+) site is built by G87 and T90.

The protein belongs to the fluoride channel Fluc/FEX (TC 1.A.43) family.

It is found in the cell inner membrane. It catalyses the reaction fluoride(in) = fluoride(out). Its activity is regulated as follows. Na(+) is not transported, but it plays an essential structural role and its presence is essential for fluoride channel function. Its function is as follows. Fluoride-specific ion channel. Important for reducing fluoride concentration in the cell, thus reducing its toxicity. In Bradyrhizobium diazoefficiens (strain JCM 10833 / BCRC 13528 / IAM 13628 / NBRC 14792 / USDA 110), this protein is Fluoride-specific ion channel FluC 1.